The following is a 375-amino-acid chain: MDAIHIGMSSTPLVKHTAGAGLKANRPRVMSKSGHSNVRIDKVDGIYLLYLQDLWTTVIDMKWRYKLTLFAATFVMTWFLFGVIYYAIAFIHGDLEPGEPISNHTPCIMKVDSLTGAFLFSLESQTTIGYGVRSITEECPHAIFLLVAQLVITTLIEIFITGTFLAKIARPKKRAETIKFSHCAVITKQNGKLCLVIQVANMRKSLLIQCQLSGKLLQTHVTKEGERILLNQATVKFHVDSSSESPFLILPMTFYHVLDETSPLRDLTPQNLKEKEFELVVLLNATVESTSAVCQSRTSYIPEEIYWGFEFVPVVSLSKNGKYVADFSQFEQIRKSPDCTFYCADSEKQQLEEKYRQEDQRERELRTLLLQQSNV.

At 1 to 60 (MDAIHIGMSSTPLVKHTAGAGLKANRPRVMSKSGHSNVRIDKVDGIYLLYLQDLWTTVID) the chain is on the cytoplasmic side. The chain crosses the membrane as a helical span at residues 61–87 (MKWRYKLTLFAATFVMTWFLFGVIYYA). Over 88-113 (IAFIHGDLEPGEPISNHTPCIMKVDS) the chain is Extracellular. Positions 114 to 130 (LTGAFLFSLESQTTIGY) form an intramembrane region, helical; Pore-forming. A Selectivity filter motif is present at residues 127–132 (TIGYGV). Residues 131-139 (GVRSITEEC) lie on the Extracellular side of the membrane. Residues 140–165 (PHAIFLLVAQLVITTLIEIFITGTFL) form a helical membrane-spanning segment. Residues 166–375 (AKIARPKKRA…RTLLLQQSNV (210 aa)) are Cytoplasmic-facing.

This sequence belongs to the inward rectifier-type potassium channel (TC 1.A.2.1) family. KCNJ15 subfamily. In terms of assembly, can form heteromultimeric channels with Kir5.1/KCNJ16. Interacts with PATJ.

It localises to the membrane. It is found in the cell membrane. The catalysed reaction is K(+)(in) = K(+)(out). Channel activity is regulated by variations of cytosolic pH; reversibly inhibited by acidic pH values. Inhibited by Ba(2+) and Cs(+) in a voltage-dependent manner. In terms of biological role, inward rectifier potassium channels are characterized by a greater tendency to allow potassium to flow into the cell rather than out of it. Their voltage dependence is regulated by the concentration of extracellular potassium; as external potassium is raised, the voltage range of the channel opening shifts to more positive voltages. The inward rectification is mainly due to the blockage of outward current by internal magnesium. This chain is ATP-sensitive inward rectifier potassium channel 15 (KCNJ15), found in Homo sapiens (Human).